The sequence spans 339 residues: Serpentine receptor class alpha-24 (339 aa).

7 consecutive transmembrane segments (helical) span residues 26-46 (ITVK…YYFA), 65-82 (LILL…TTML), 112-132 (ELFV…SLAF), 151-171 (VSIF…YVGL), 199-219 (FRTL…YLSV), 248-268 (VCIL…GVNY), and 284-304 (LAPF…VIHC).

The protein belongs to the nematode receptor-like protein sra family.

The protein resides in the membrane. The polypeptide is Serpentine receptor class alpha-24 (sra-24) (Caenorhabditis elegans).